A 38-amino-acid polypeptide reads, in one-letter code: Large ribosomal subunit protein bL36A (38 aa).

This sequence belongs to the bacterial ribosomal protein bL36 family.

This Enterobacter sp. (strain 638) protein is Large ribosomal subunit protein bL36A.